A 301-amino-acid polypeptide reads, in one-letter code: Probable alpha-L-glutamate ligase (301 aa).

The ATP-grasp domain occupies 104 to 287; that stretch reads LQLLSRKGIG…IAGMIIEYIE (184 aa). ATP-binding positions include Lys-141, 178-179, Asp-187, and 211-213; these read EY and RSN. The Mg(2+) site is built by Asp-248, Glu-260, and Asn-262. Mn(2+) contacts are provided by Asp-248, Glu-260, and Asn-262.

The protein belongs to the RimK family. Mg(2+) serves as cofactor. The cofactor is Mn(2+).

The sequence is that of Probable alpha-L-glutamate ligase from Methanococcoides burtonii (strain DSM 6242 / NBRC 107633 / OCM 468 / ACE-M).